Here is a 63-residue protein sequence, read N- to C-terminus: Large ribosomal subunit protein uL30 (63 aa).

The protein belongs to the universal ribosomal protein uL30 family. Part of the 50S ribosomal subunit.

This is Large ribosomal subunit protein uL30 from Bradyrhizobium sp. (strain ORS 278).